We begin with the raw amino-acid sequence, 327 residues long: AA9 family lytic polysaccharide monooxygenase B (327 aa).

Residues 1–19 (MKSFTATALAALLAQQAAA) form the signal peptide. His-20 and His-98 together coordinate Cu(2+). An intrachain disulfide couples Cys-68 to Cys-192. O2 contacts are provided by His-178 and Gln-187. Tyr-189 contributes to the Cu(2+) binding site. The segment covering 264-280 (SPTTSLTPPVSTSTPAP) has biased composition (low complexity). Residues 264-284 (SPTTSLTPPVSTSTPAPGNGG) form a disordered region. The region spanning 291 to 327 (CTVQKYGQCGGQGYTGCTTCAAGSTCNTTNQWYHQCV) is the CBM1 domain. N-linked (GlcNAc...) asparagine glycosylation is present at Asn-317.

Belongs to the polysaccharide monooxygenase AA9 family. The cofactor is Cu(2+).

Its subcellular location is the secreted. It catalyses the reaction [(1-&gt;4)-beta-D-glucosyl]n+m + reduced acceptor + O2 = 4-dehydro-beta-D-glucosyl-[(1-&gt;4)-beta-D-glucosyl]n-1 + [(1-&gt;4)-beta-D-glucosyl]m + acceptor + H2O.. Its function is as follows. Lytic polysaccharide monooxygenase (LPMO) that depolymerizes crystalline and amorphous polysaccharides via the oxidation of scissile alpha- or beta-(1-4)-glycosidic bonds, yielding C1 or C4 oxidation products. Catalysis by LPMOs requires the reduction of the active-site copper from Cu(II) to Cu(I) by a reducing agent and H(2)O(2) or O(2) as a cosubstrate. This chain is AA9 family lytic polysaccharide monooxygenase B (LPMO9B), found in Podospora anserina (strain S / ATCC MYA-4624 / DSM 980 / FGSC 10383) (Pleurage anserina).